We begin with the raw amino-acid sequence, 598 residues long: Serine/threonine-protein kinase PLK1 (598 aa).

The segment at methionine 1–serine 26 is disordered. A phosphoserine mark is found at serine 25 and serine 26. The Protein kinase domain maps to tyrosine 44–phenylalanine 296. ATP is bound by residues leucine 50 to cysteine 58, lysine 73, and glutamate 122. The active-site Proton acceptor is aspartate 167. ATP is bound by residues lysine 169 to asparagine 172 and aspartate 185. Positions aspartate 185–glutamate 212 are activation loop. Threonine 201 bears the Phosphothreonine mark. Phosphoserine; by autocatalysis is present on residues serine 260 and serine 326. Positions arginine 328 to leucine 331 match the D-box that targets the protein for proteasomal degradation in anaphase motif. The tract at residues lysine 336–serine 360 is disordered. Serine 340 bears the Phosphoserine mark. The POLO box 1 domain maps to tryptophan 404–glutamate 482. A linker region spans residues alanine 487–arginine 501. One can recognise a POLO box 2 domain in the interval phenylalanine 504–serine 586. The segment at histidine 532–lysine 534 is important for interaction with phosphorylated proteins.

It belongs to the protein kinase superfamily. Ser/Thr protein kinase family. As to quaternary structure, interacts with plk1 and kif2a. Interacts with fbxo5. Activated by phosphorylation on Thr-201 during M phase. In terms of processing, protein levels are down-regulated by proteasomal degradation in anaphase.

The protein localises to the nucleus. It is found in the cytoplasm. The protein resides in the cytoskeleton. It localises to the microtubule organizing center. Its subcellular location is the centrosome. The protein localises to the spindle. It is found in the midbody. It carries out the reaction L-seryl-[protein] + ATP = O-phospho-L-seryl-[protein] + ADP + H(+). It catalyses the reaction L-threonyl-[protein] + ATP = O-phospho-L-threonyl-[protein] + ADP + H(+). In terms of biological role, plays multiple essential roles during mitosis. Phosphorylates the N-terminal domain of cdc25, which leads to cyclin b-cdc2 activation and mitotic entry. Also required for organization of bipolar spindles, and for exit from mitosis. Phosphorylates tpx2. In Xenopus tropicalis (Western clawed frog), this protein is Serine/threonine-protein kinase PLK1 (plk1).